Consider the following 591-residue polypeptide: Parathyroid hormone/parathyroid hormone-related peptide receptor (591 aa).

The signal sequence occupies residues 1 to 26; it reads MGTARIAPSLALLLCCPVLSSAYALV. At 27-188 the chain is on the extracellular side; the sequence is DADDVFTKEE…REREVFDRLG (162 aa). 3 disulfides stabilise this stretch: cysteine 48/cysteine 117, cysteine 108/cysteine 148, and cysteine 131/cysteine 170. The tract at residues 67–104 is disordered; sequence KGWTPASTSGKPRKEKAPGKFYPESKENKDVPTGSRRR. Residues 81-96 show a composition bias toward basic and acidic residues; it reads EKAPGKFYPESKENKD. 4 N-linked (GlcNAc...) asparagine glycosylation sites follow: asparagine 151, asparagine 161, asparagine 166, and asparagine 176. Residues 189–212 form a helical membrane-spanning segment; sequence MIYTVGYSMSLASLTVAVLILAYF. The Cytoplasmic segment spans residues 213 to 219; it reads RRLHCTR. A helical transmembrane segment spans residues 220–239; that stretch reads NYIHMHMFLSFMLRAASIFV. The Extracellular portion of the chain corresponds to 240–282; it reads KDAVLYSGFTLDEAERLTEEELHIIAQVPPPPAAAAVGYAGCR. A helical transmembrane segment spans residues 283–306; sequence VAVTFFLYFLATNYYWILVEGLYL. The Cytoplasmic portion of the chain corresponds to 307 to 320; that stretch reads HSLIFMAFFSEKKY. A helical transmembrane segment spans residues 321 to 342; it reads LWGFTIFGWGLPAVFVAVWVGV. The Extracellular segment spans residues 343 to 361; it reads RATLANTGCWDLSSGHKKW. A helical membrane pass occupies residues 362–382; sequence IIQVPILASVVLNFILFINII. At 383–409 the chain is on the cytoplasmic side; the sequence is RVLATKLRETNAGRCDTRQQYRKLLRS. A helical membrane pass occupies residues 410–428; that stretch reads TLVLVPLFGVHYTVFMALP. Topologically, residues 429-440 are extracellular; the sequence is YTEVSGTLWQIQ. The chain crosses the membrane as a helical span at residues 441–463; it reads MHYEMLFNSFQGFFVAIIYCFCN. Residues 464–591 are Cytoplasmic-facing; the sequence is GEVQAEIRKS…LLQEEWETVM (128 aa). The Important for interaction with G proteins signature appears at 474–477; that stretch reads WSRW.

Belongs to the G-protein coupled receptor 2 family. Homodimer in the absence of bound ligand. Peptide hormone binding leads to dissociation of the homodimer. In terms of processing, N-glycosylated. In terms of tissue distribution, detected in kidney.

The protein localises to the cell membrane. Its function is as follows. G-protein-coupled receptor for parathyroid hormone (PTH) and for parathyroid hormone-related peptide (PTHLH). Ligand binding causes a conformation change that triggers signaling via guanine nucleotide-binding proteins (G proteins) and modulates the activity of downstream effectors, such as adenylate cyclase (cAMP). PTH1R is coupled to G(s) G alpha proteins and mediates activation of adenylate cyclase activity. PTHLH dissociates from PTH1R more rapidly than PTH; as consequence, the cAMP response induced by PTHLH decays faster than the response induced by PTH. This is Parathyroid hormone/parathyroid hormone-related peptide receptor (Pth1r) from Mus musculus (Mouse).